Here is a 249-residue protein sequence, read N- to C-terminus: MIKVTDVEKSYQSAHVFKRRRTPIVKGVSFECPIGATIAIIGESGSGKSTLSRMILGIEKPDKGCVTLNDLPMHKKKVRRHQIGAVFQDYTSSLHPFQTVREILFEVMCQCDGQPKEVMEVQAITLLEEVGLSKAYMDKYPNMLSGGEAQRVAIARAICINPKYILFDEAISSLDMSIQTQILDLLIHLRETRQLSYIFITHDIQAATYLCDQLIIFKNGKIEEQIPTSALHKSDNAYTRELIEKQLSF.

In terms of domain architecture, ABC transporter spans 2–244 (IKVTDVEKSY…DNAYTRELIE (243 aa)). 42 to 49 (GESGSGKS) is a binding site for ATP.

It belongs to the ABC transporter superfamily. The complex is composed of two ATP-binding proteins (CntD and CntF), two transmembrane proteins (CntB and CntC) and a solute-binding protein (CntA).

It is found in the cell membrane. In terms of biological role, part of the ABC transporter complex CntABCDF (Opp1) involved in the uptake of metal in complex with the metallophore staphylopine (StP). May be involved in the import of a large array of divalent metals ions such as nickel, cobalt, zinc, copper and iron. Probably responsible for energy coupling to the transport system. This Staphylococcus aureus (strain Mu50 / ATCC 700699) protein is Metal-staphylopine import system ATP-binding protein CntF.